Consider the following 320-residue polypeptide: Pyrroline-5-carboxylate reductase 2 (320 aa).

Residue Ser2 is modified to N-acetylserine. Residues 6–11 and Ser34 each bind NADP(+); that span reads IGAGQL. NADPH is bound by residues Ala8, Gln10, Leu11, Ser34, Glu36, Asn56, Val70, Lys71, and Ala97. Residues Asn56, 69-72, and 95-97 contribute to the NADP(+) site; these read AVKP and CAA. An L-proline-binding site is contributed by Glu164. Asn230 serves as a coordination point for NADPH. Residues Ala237 and Thr238 each contribute to the L-proline site. A disordered region spans residues 293–320; sequence ESPTVSTLAPPSSGKLLTRNPAQGSKRE. Phosphoserine is present on Ser304.

This sequence belongs to the pyrroline-5-carboxylate reductase family. Homodecamer; composed of 5 homodimers. Interacts with LTO1.

Its subcellular location is the cytoplasm. The protein localises to the mitochondrion. The enzyme catalyses L-proline + NADP(+) = (S)-1-pyrroline-5-carboxylate + NADPH + 2 H(+). It carries out the reaction L-proline + NAD(+) = (S)-1-pyrroline-5-carboxylate + NADH + 2 H(+). Its pathway is amino-acid biosynthesis; L-proline biosynthesis; L-proline from L-glutamate 5-semialdehyde: step 1/1. Its function is as follows. Oxidoreductase that catalyzes the last step in proline biosynthesis, which corresponds to the reduction of pyrroline-5-carboxylate to L-proline using NAD(P)H. At physiologic concentrations, has higher specific activity in the presence of NADH. Involved in cellular response to oxidative stress. In some cell types, such as erythrocytes, its primary function may be the generation of NADP(+). The polypeptide is Pyrroline-5-carboxylate reductase 2 (Rattus norvegicus (Rat)).